Consider the following 65-residue polypeptide: ATP synthase F(0) complex subunit 8 (65 aa).

Residues 8–24 (TWLTTILSMFLALFIIF) traverse the membrane as a helical segment. The residue at position 53 (K53) is an N6-acetyllysine; alternate. K53 is subject to N6-succinyllysine; alternate. N6-acetyllysine is present on K56.

It belongs to the ATPase protein 8 family. In terms of assembly, component of the ATP synthase complex composed at least of ATP5F1A/subunit alpha, ATP5F1B/subunit beta, ATP5MC1/subunit c (homooctomer), MT-ATP6/subunit a, MT-ATP8/subunit 8, ATP5ME/subunit e, ATP5MF/subunit f, ATP5MG/subunit g, ATP5MK/subunit k, ATP5MJ/subunit j, ATP5F1C/subunit gamma, ATP5F1D/subunit delta, ATP5F1E/subunit epsilon, ATP5PF/subunit F6, ATP5PB/subunit b, ATP5PD/subunit d, ATP5PO/subunit OSCP. ATP synthase complex consists of a soluble F(1) head domain (subunits alpha(3) and beta(3)) - the catalytic core - and a membrane F(0) domain - the membrane proton channel (subunits c, a, 8, e, f, g, k and j). These two domains are linked by a central stalk (subunits gamma, delta, and epsilon) rotating inside the F1 region and a stationary peripheral stalk (subunits F6, b, d, and OSCP). Interacts with PRICKLE3.

The protein resides in the mitochondrion membrane. Subunit 8, of the mitochondrial membrane ATP synthase complex (F(1)F(0) ATP synthase or Complex V) that produces ATP from ADP in the presence of a proton gradient across the membrane which is generated by electron transport complexes of the respiratory chain. ATP synthase complex consist of a soluble F(1) head domain - the catalytic core - and a membrane F(1) domain - the membrane proton channel. These two domains are linked by a central stalk rotating inside the F(1) region and a stationary peripheral stalk. During catalysis, ATP synthesis in the catalytic domain of F(1) is coupled via a rotary mechanism of the central stalk subunits to proton translocation. In vivo, can only synthesize ATP although its ATP hydrolase activity can be activated artificially in vitro. Part of the complex F(0) domain. The protein is ATP synthase F(0) complex subunit 8 of Capra ibex ibex (Alpine ibex).